The following is a 648-amino-acid chain: Macrolide export ATP-binding/permease protein MacB (648 aa).

Residues 1-272 are Cytoplasmic-facing; it reads MTPLLELKDI…RALAANKMRT (272 aa). In terms of domain architecture, ABC transporter spans 5 to 243; it reads LELKDIRRSY…TGGTEPVVNT (239 aa). 41–48 serves as a coordination point for ATP; sequence GASGSGKS. A helical transmembrane segment spans residues 273–293; that stretch reads LLTMLGIIIGIASVVSIVVVG. Residues 294–522 lie on the Periplasmic side of the membrane; it reads DAAKQMVLAD…TVEKTTRTLQ (229 aa). The chain crosses the membrane as a helical span at residues 523-543; it reads LFLTLVAVISLVVGGIGVMNI. The Cytoplasmic portion of the chain corresponds to 544–575; sequence MLVSVTERTREIGIRMAVGARASDVLQQFLIE. A helical transmembrane segment spans residues 576–596; it reads AVLVCLVGGALGITLSLLIAF. Topologically, residues 597–610 are periplasmic; sequence TLQLFLPGWEIGFS. A helical transmembrane segment spans residues 611–631; that stretch reads PLALLLAFLCSTVTGILFGWL. Over 632–648 the chain is Cytoplasmic; it reads PARNAARLDPVDALARE.

It belongs to the ABC transporter superfamily. Macrolide exporter (TC 3.A.1.122) family. Homodimer. Part of the tripartite efflux system MacAB-TolC, which is composed of an inner membrane transporter, MacB, a periplasmic membrane fusion protein, MacA, and an outer membrane component, TolC. The complex forms a large protein conduit and can translocate molecules across both the inner and outer membranes. Interacts with MacA.

Its subcellular location is the cell inner membrane. With respect to regulation, ATPase activity is stimulated by interaction with MacA and inhibited by vanadate. Part of the tripartite efflux system MacAB-TolC. MacB is a non-canonical ABC transporter that contains transmembrane domains (TMD), which form a pore in the inner membrane, and an ATP-binding domain (NBD), which is responsible for energy generation. When overexpressed, the system confers resistance against macrolides composed of 14- and 15-membered lactones but no or weak resistance against 16-membered ones. In addition, the system could also transport R-LPS or a similar glycolipid. The chain is Macrolide export ATP-binding/permease protein MacB from Escherichia coli (strain K12).